Consider the following 236-residue polypeptide: Small ribosomal subunit protein uS2c (236 aa).

This sequence belongs to the universal ribosomal protein uS2 family.

It localises to the plastid. The protein resides in the chloroplast. The polypeptide is Small ribosomal subunit protein uS2c (rps2) (Triticum aestivum (Wheat)).